Reading from the N-terminus, the 271-residue chain is RELT-like protein 1 (271 aa).

The N-terminal stretch at methionine 1–serine 23 is a signal peptide. The Extracellular portion of the chain corresponds to serine 24 to glutamate 57. The interval valine 27–glycine 52 is disordered. A compositionally biased stretch (low complexity) spans proline 36–glycine 52. A helical membrane pass occupies residues tyrosine 58–cysteine 78. Residues histidine 79–glutamate 271 are Cytoplasmic-facing. Residues serine 109 and serine 114 each carry the phosphoserine modification. Disordered regions lie at residues cysteine 144–glycine 168 and threonine 231–glutamate 271. Over residues proline 155–leucine 165 the composition is skewed to pro residues. Positions threonine 231–serine 244 are enriched in basic and acidic residues. Phosphoserine occurs at positions 244 and 247.

It belongs to the RELT family. As to quaternary structure, interacts with RELT, RELL2, OXSR1 and PLSCR1.

It is found in the cell membrane. In terms of biological role, induces activation of MAPK14/p38 cascade, when overexpressed. Induces apoptosis, when overexpressed. The chain is RELT-like protein 1 (RELL1) from Bos taurus (Bovine).